The sequence spans 176 residues: Ribosome maturation factor RimM (176 aa).

The 74-residue stretch at 101–174 (EGHYYIYQLL…EIRVELPPGL (74 aa)) folds into the PRC barrel domain.

This sequence belongs to the RimM family. In terms of assembly, binds ribosomal protein uS19.

It is found in the cytoplasm. In terms of biological role, an accessory protein needed during the final step in the assembly of 30S ribosomal subunit, possibly for assembly of the head region. Essential for efficient processing of 16S rRNA. May be needed both before and after RbfA during the maturation of 16S rRNA. It has affinity for free ribosomal 30S subunits but not for 70S ribosomes. This Moorella thermoacetica (strain ATCC 39073 / JCM 9320) protein is Ribosome maturation factor RimM.